We begin with the raw amino-acid sequence, 258 residues long: Beta carbonic anhydrase 3 (258 aa).

The signal sequence occupies residues 1-28; that stretch reads MSTESYEDAIKRLGELLSKKSDLGNVAA. A coiled-coil region spans residues 24 to 54; sequence GNVAAAKIKKLTDELEELDSNKLDAVERIKS. At Thr35 the chain carries Phosphothreonine. At Ser95 the chain carries Phosphoserine. S-nitrosocysteine is present on Cys201.

The protein belongs to the beta-class carbonic anhydrase family. As to expression, strongly expressed in aerial tissues including leaves, stems, flowers and siliques, and, to a lower extent, in roots.

It localises to the cytoplasm. The protein localises to the cytosol. It carries out the reaction hydrogencarbonate + H(+) = CO2 + H2O. Reversible hydration of carbon dioxide. This Arabidopsis thaliana (Mouse-ear cress) protein is Beta carbonic anhydrase 3 (BCA3).